The sequence spans 234 residues: Exotoxin type G (234 aa).

The signal sequence occupies residues 1–24 (MKTNILTIIILSCVFSYGSQLAYA).

This sequence belongs to the staphylococcal/streptococcal toxin family.

Its function is as follows. Mitogenic for human peripheral blood lymphocytes. The sequence is that of Exotoxin type G (speG) from Streptococcus pyogenes serotype M1.